We begin with the raw amino-acid sequence, 263 residues long: Phosphatidylglycerol--prolipoprotein diacylglyceryl transferase (263 aa).

3 consecutive transmembrane segments (helical) span residues 17 to 37 (LSVR…IFLG), 56 to 76 (LLFY…VLFY), and 88 to 108 (IFAV…VLVA). An a 1,2-diacyl-sn-glycero-3-phospho-(1'-sn-glycerol)-binding site is contributed by arginine 139. Helical transmembrane passes span 176–196 (QLYH…WFTA) and 236–256 (ISMG…MVVF).

Belongs to the Lgt family.

The protein localises to the cell inner membrane. The enzyme catalyses L-cysteinyl-[prolipoprotein] + a 1,2-diacyl-sn-glycero-3-phospho-(1'-sn-glycerol) = an S-1,2-diacyl-sn-glyceryl-L-cysteinyl-[prolipoprotein] + sn-glycerol 1-phosphate + H(+). It participates in protein modification; lipoprotein biosynthesis (diacylglyceryl transfer). Functionally, catalyzes the transfer of the diacylglyceryl group from phosphatidylglycerol to the sulfhydryl group of the N-terminal cysteine of a prolipoprotein, the first step in the formation of mature lipoproteins. The protein is Phosphatidylglycerol--prolipoprotein diacylglyceryl transferase of Dechloromonas aromatica (strain RCB).